We begin with the raw amino-acid sequence, 88 residues long: Small ribosomal subunit protein bS20 (88 aa).

2 disordered regions span residues 1-25 (MPNI…KAVK) and 68-88 (HKNQ…SLAA).

It belongs to the bacterial ribosomal protein bS20 family.

Binds directly to 16S ribosomal RNA. The sequence is that of Small ribosomal subunit protein bS20 from Cutibacterium acnes (strain DSM 16379 / KPA171202) (Propionibacterium acnes).